The following is a 130-amino-acid chain: MNTDKKAVTKKKVKRNVPQGNCYIQAGFGNVIVTMTDPTGATVSWSSAGHLGFKGSRKGTPFAAQVAAEDAAKKAMEAGMKSVDVYLKGPGAGREPAIRALAATGMRILSLKDVTPVPHNGCRPPKRRRI.

The protein belongs to the universal ribosomal protein uS11 family. Part of the 30S ribosomal subunit. Interacts with proteins S7 and S18. Binds to IF-3.

In terms of biological role, located on the platform of the 30S subunit, it bridges several disparate RNA helices of the 16S rRNA. Forms part of the Shine-Dalgarno cleft in the 70S ribosome. This is Small ribosomal subunit protein uS11 from Bdellovibrio bacteriovorus (strain ATCC 15356 / DSM 50701 / NCIMB 9529 / HD100).